A 149-amino-acid polypeptide reads, in one-letter code: Aspartate 1-decarboxylase (149 aa).

Residue serine 25 is the Schiff-base intermediate with substrate; via pyruvic acid of the active site. Position 25 is a pyruvic acid (Ser) (serine 25). Residue threonine 57 coordinates substrate. Tyrosine 58 acts as the Proton donor in catalysis. Substrate is bound at residue 73–75 (GAA). The tract at residues 119–149 (GDPAAALPGDPSSLRGDVLDPAGARGLGGGA) is disordered.

This sequence belongs to the PanD family. Heterooctamer of four alpha and four beta subunits. Pyruvate is required as a cofactor. Post-translationally, is synthesized initially as an inactive proenzyme, which is activated by self-cleavage at a specific serine bond to produce a beta-subunit with a hydroxyl group at its C-terminus and an alpha-subunit with a pyruvoyl group at its N-terminus.

It localises to the cytoplasm. The catalysed reaction is L-aspartate + H(+) = beta-alanine + CO2. Its pathway is cofactor biosynthesis; (R)-pantothenate biosynthesis; beta-alanine from L-aspartate: step 1/1. Its function is as follows. Catalyzes the pyruvoyl-dependent decarboxylation of aspartate to produce beta-alanine. The polypeptide is Aspartate 1-decarboxylase (Parafrankia sp. (strain EAN1pec)).